The sequence spans 306 residues: Peroxisomal protein PEX21 (306 aa).

Residue Cys-4 forms a Glycyl cysteine thioester (Cys-Gly) (interchain with G-Cter in ubiquitin) linkage. Positions 172–203 (ERQVQDDEKEQQQDKDDDFHLKETSPLDEDQR) are disordered.

Belongs to the peroxin-21 family. In terms of assembly, interacts with PEX7. Post-translationally, monoubiquitinated at Cys-4; acts as a signal for PEX21 extraction and is required for proper export from peroxisomes and recycling.

Its subcellular location is the cytoplasm. It localises to the cytosol. The protein localises to the peroxisome. Functionally, mediates peroxisomal import of proteins containing a C-terminal PTS2-type peroxisomal targeting signal via its interaction with PEX7. Interaction with PEX7 only takes place when PEX7 is associated with cargo proteins containing a PTS2 peroxisomal targeting signal. PEX7 along with PTS2-containing cargo proteins are then translocated through the PEX13-PEX14 docking complex together with PEX21. This is Peroxisomal protein PEX21 (PEX21) from Kluyveromyces lactis (strain ATCC 8585 / CBS 2359 / DSM 70799 / NBRC 1267 / NRRL Y-1140 / WM37) (Yeast).